The sequence spans 320 residues: Cytochrome f (320 aa).

The first 35 residues, 1–35 (MQTRNAFSWLKKQITRSISVSLMIYILTRTSISSA), serve as a signal peptide directing secretion. Residues Tyr36, Cys56, Cys59, and His60 each coordinate heme. Residues 286 to 305 (VQGLLFFLASVILAQIFLVL) traverse the membrane as a helical segment.

It belongs to the cytochrome f family. The 4 large subunits of the cytochrome b6-f complex are cytochrome b6, subunit IV (17 kDa polypeptide, petD), cytochrome f and the Rieske protein, while the 4 small subunits are PetG, PetL, PetM and PetN. The complex functions as a dimer. Heme is required as a cofactor.

Its subcellular location is the plastid. It localises to the chloroplast thylakoid membrane. In terms of biological role, component of the cytochrome b6-f complex, which mediates electron transfer between photosystem II (PSII) and photosystem I (PSI), cyclic electron flow around PSI, and state transitions. The chain is Cytochrome f from Atropa belladonna (Belladonna).